Consider the following 88-residue polypeptide: UPF0250 protein SO_1163 (88 aa).

This sequence belongs to the UPF0250 family.

This Shewanella oneidensis (strain ATCC 700550 / JCM 31522 / CIP 106686 / LMG 19005 / NCIMB 14063 / MR-1) protein is UPF0250 protein SO_1163.